Consider the following 138-residue polypeptide: Actophorin (138 aa).

In terms of domain architecture, ADF-H spans 3-134; it reads GIQLADEVTS…NLDEVIAKVK (132 aa).

Belongs to the actin-binding proteins ADF family. As to quaternary structure, interacts with F-actin. Does not interact with G-actin. Interacts with 14-3-3 protein 3.

The protein resides in the cytoplasm. The protein localises to the cytoskeleton. It is found in the cell membrane. Its subcellular location is the cell projection. It localises to the phagocytic cup. The protein resides in the pseudopodium. In terms of biological role, actin-binding protein that severs actin filaments. This Entamoeba histolytica (strain ATCC 30459 / HM-1:IMSS / ABRM) protein is Actophorin.